The primary structure comprises 971 residues: E3 ubiquitin-protein ligase MIB2 (971 aa).

The MIB/HERC2 1 domain maps to 1–80; sequence MDLDPHAGVQ…AHDLLLYDNA (80 aa). The segment at 86 to 138 adopts a ZZ-type zinc-finger fold; the sequence is HPNIICDCCKKHGLRGMRWKCRVCFDYDLCTQCYMHNKHDLTHAFERYETSHS. Positions 91, 94, 106, 109, 115, 118, 124, and 128 each coordinate Zn(2+). An MIB/HERC2 2 domain is found at 149–227; it reads LPRIPLRGIF…KVDLKCVGEA (79 aa). Ser251 carries the phosphoserine modification. 9 ANK repeats span residues 478-507, 511-540, 544-573, 577-609, 613-642, 647-677, 681-710, 714-742, and 783-812; these read QGRT…SVDL, EGNT…GVDA, TRST…DVNL, HADT…DVTA, QGFT…QLVD, DGFT…DVNV, KLQS…NVNT, EGDT…DPGP, and RGRS…ERQA. 2 consecutive RING-type zinc fingers follow at residues 848-883 and 927-960; these read CLVC…IRCQ and CPIC…PICR.

In terms of assembly, interacts with actin monomer. Post-translationally, ubiquitinated. Possibly via autoubiquitination.

It localises to the cytoplasm. The protein resides in the endosome. It carries out the reaction S-ubiquitinyl-[E2 ubiquitin-conjugating enzyme]-L-cysteine + [acceptor protein]-L-lysine = [E2 ubiquitin-conjugating enzyme]-L-cysteine + N(6)-ubiquitinyl-[acceptor protein]-L-lysine.. Its pathway is protein modification; protein ubiquitination. Its function is as follows. E3 ubiquitin-protein ligase that mediates ubiquitination of Delta receptors, which act as ligands of Notch proteins. Positively regulates the Delta-mediated Notch signaling by ubiquitinating the intracellular domain of Delta, leading to endocytosis of Delta receptors. The chain is E3 ubiquitin-protein ligase MIB2 (Mib2) from Rattus norvegicus (Rat).